The following is a 429-amino-acid chain: Glutamate-1-semialdehyde 2,1-aminomutase 2 (429 aa).

Residue lysine 268 is modified to N6-(pyridoxal phosphate)lysine.

This sequence belongs to the class-III pyridoxal-phosphate-dependent aminotransferase family. HemL subfamily. In terms of assembly, homodimer. Pyridoxal 5'-phosphate is required as a cofactor.

It is found in the cytoplasm. It catalyses the reaction (S)-4-amino-5-oxopentanoate = 5-aminolevulinate. It functions in the pathway porphyrin-containing compound metabolism; protoporphyrin-IX biosynthesis; 5-aminolevulinate from L-glutamyl-tRNA(Glu): step 2/2. The chain is Glutamate-1-semialdehyde 2,1-aminomutase 2 from Bacillus mycoides (strain KBAB4) (Bacillus weihenstephanensis).